A 196-amino-acid polypeptide reads, in one-letter code: Large ribosomal subunit protein mL66 (196 aa).

A mitochondrion-targeting transit peptide spans 1–34 (MAALRRLVSGCGRQLQAFLAGPAATGWLWLPARG).

Belongs to the bacterial ribosomal protein bS18 family. Mitochondrion-specific ribosomal protein mL66 subfamily. As to quaternary structure, component of the mitochondrial ribosome small subunit (28S) which comprises a 12S rRNA and about 30 distinct proteins.

It localises to the mitochondrion. The chain is Large ribosomal subunit protein mL66 (Mrps18a) from Mus musculus (Mouse).